Reading from the N-terminus, the 168-residue chain is mRNA stability protein IGO1 (168 aa).

Positions 1-13 are enriched in low complexity; that stretch reads MSNENLSPNSSNP. Residues 1 to 31 are disordered; it reads MSNENLSPNSSNPDLTKLNNGESGTIDTSKF. The span at 17–31 shows a compositional bias: polar residues; sequence KLNNGESGTIDTSKF. 2 positions are modified to phosphoserine: Ser32 and Ser64. A disordered region spans residues 125 to 168; it reads KEGSISSGPPSSNNGTIGGGSTSSTPVGNHSSSSSSLYTESPIR. 2 stretches are compositionally biased toward low complexity: residues 127–139 and 146–168; these read GSIS…SNNG and TSST…SPIR.

Belongs to the endosulfine family. Interacts with RIM15, DHH1, PBP1, PBP4 and LSM12. Phosphorylated at Ser-64 by RIM15.

Functionally, required for TORC1 to properly control gene expression and chronological life span. Plays an essential role in initiation of the G0 program by preventing the degradation of specific nutrient-regulated mRNAs via the 5'-3' mRNA decay pathway. This chain is mRNA stability protein IGO1 (IGO1), found in Saccharomyces cerevisiae (strain ATCC 204508 / S288c) (Baker's yeast).